A 303-amino-acid chain; its full sequence is Protoheme IX farnesyltransferase (303 aa).

9 helical membrane passes run 30–50, 54–74, 101–121, 123–143, 150–170, 178–198, 219–241, 245–262, and 279–299; these read VMSL…STVS, AMIA…LNMW, ALIF…YFAN, ISAV…TIWL, NIVI…TIAT, ITFF…LSLY, STKI…PYAI, GLVF…YNIL, and AKTI…IFLI.

The protein belongs to the UbiA prenyltransferase family. Protoheme IX farnesyltransferase subfamily.

The protein localises to the cell inner membrane. The catalysed reaction is heme b + (2E,6E)-farnesyl diphosphate + H2O = Fe(II)-heme o + diphosphate. It participates in porphyrin-containing compound metabolism; heme O biosynthesis; heme O from protoheme: step 1/1. Functionally, converts heme B (protoheme IX) to heme O by substitution of the vinyl group on carbon 2 of heme B porphyrin ring with a hydroxyethyl farnesyl side group. The chain is Protoheme IX farnesyltransferase from Pelagibacter ubique (strain HTCC1062).